Consider the following 430-residue polypeptide: UPF0597 protein Clos_2050 (430 aa).

Belongs to the UPF0597 family.

In Alkaliphilus oremlandii (strain OhILAs) (Clostridium oremlandii (strain OhILAs)), this protein is UPF0597 protein Clos_2050.